The sequence spans 303 residues: MSSVLERPAAPAILPSRQDGEGSVQVKMDPNLKIGTARVFSVYGKGGIGKSTTSSNLSVAFSKLGKRVLQIGCDPKHDSTFTLTKKLVPTVIDVLESVNFHSEELRPEDFVYPGYNGVMCVEAGGPPAGTGCGGYVVGQTVKLLKEHHLLEDTDVVIFDVLGDVVCGGFAAPLQHAQRALIVAANDFDSIFAMNRIVAAIQAKSKNYEVRLGGVICNRSAATDQIDKFNAAVGLNTLAHLPDLDGIRRSRLKKCTVFEMEDEPELERARQEYLRLAATLLAGTEPLAPAPLRDRDIFDLLGFD.

The segment at 1 to 24 is disordered; that stretch reads MSSVLERPAAPAILPSRQDGEGSV. ATP contacts are provided by residues 47 to 52 and lysine 76; that span reads GIGKST. Position 51 (serine 51) interacts with Mg(2+). Positions 132 and 166 each coordinate [4Fe-4S] cluster. ATP is bound by residues 217–218 and 241–243; these read NR and PDL.

The protein belongs to the NifH/BchL/ChlL family. In terms of assembly, homodimer. Protochlorophyllide reductase is composed of three subunits; BchL, BchN and BchB. Requires [4Fe-4S] cluster as cofactor.

The catalysed reaction is chlorophyllide a + oxidized 2[4Fe-4S]-[ferredoxin] + 2 ADP + 2 phosphate = protochlorophyllide a + reduced 2[4Fe-4S]-[ferredoxin] + 2 ATP + 2 H2O. It participates in porphyrin-containing compound metabolism; bacteriochlorophyll biosynthesis (light-independent). Functionally, component of the dark-operative protochlorophyllide reductase (DPOR) that uses Mg-ATP and reduced ferredoxin to reduce ring D of protochlorophyllide (Pchlide) to form chlorophyllide a (Chlide). This reaction is light-independent. The L component serves as a unique electron donor to the NB-component of the complex, and binds Mg-ATP. The sequence is that of Light-independent protochlorophyllide reductase iron-sulfur ATP-binding protein from Rhodospirillum centenum (strain ATCC 51521 / SW).